A 505-amino-acid chain; its full sequence is MAQIDFRKKINWHRRYRSPQGVKTEHEILRIFESDRGRIINSPAIRRLQQKTQVFPLERNAAVRTRLTHSMEVQQVGRYIAKEILSRLKELKLLEAYGLDELTGPFESIVEMSCLMHDIGNPPFGHFGEAAINDWFRQRLHPEDAESQPLTDDRCSVAALRLRDGEEPLNELRRKIRQDLCHFEGNAQGIRLVHTLMRMNLTWAQVGGILKYTRPAWWRGETPETHHYLMKKPGYYLSEEAYIARLRKELNLALYSRFPLTWIMEAADDISYCVADLEDAVEKRIFTVEQLYHHLHEAWGQHEKGSLFSLVVENAWEKSRSNSLSRSTEDQFFMYLRVNTLNKLVPYAAQRFIDNLPAIFAGTFNHALLEDASECSDLLKLYKNVAVKHVFSHPDVEQLELQGYRVISGLLEIYRPLLSLSLSDFTELVEKERVKRFPIESRLFHKLSTRHRLAYVEAVSKLPSDSPEFPLWEYYYRCRLLQDYISGMTDLYAWDEYRRLMAVEQ.

The HD domain occupies 66–273 (RLTHSMEVQQ…MEAADDISYC (208 aa)).

This sequence belongs to the dGTPase family. Type 1 subfamily. In terms of assembly, homotetramer. It depends on Mg(2+) as a cofactor.

The catalysed reaction is dGTP + H2O = 2'-deoxyguanosine + triphosphate + H(+). In terms of biological role, dGTPase preferentially hydrolyzes dGTP over the other canonical NTPs. The polypeptide is Deoxyguanosinetriphosphate triphosphohydrolase (Escherichia coli O7:K1 (strain IAI39 / ExPEC)).